The following is a 363-amino-acid chain: 3-dehydroquinate synthase (363 aa).

NAD(+) contacts are provided by residues 72-77, 106-110, 130-131, K142, and K151; these read SGEQSK, GVIGD, and TT. E184, H246, and H263 together coordinate Zn(2+).

It belongs to the sugar phosphate cyclases superfamily. Dehydroquinate synthase family. Co(2+) serves as cofactor. The cofactor is Zn(2+). NAD(+) is required as a cofactor.

Its subcellular location is the cytoplasm. It catalyses the reaction 7-phospho-2-dehydro-3-deoxy-D-arabino-heptonate = 3-dehydroquinate + phosphate. The protein operates within metabolic intermediate biosynthesis; chorismate biosynthesis; chorismate from D-erythrose 4-phosphate and phosphoenolpyruvate: step 2/7. Its function is as follows. Catalyzes the conversion of 3-deoxy-D-arabino-heptulosonate 7-phosphate (DAHP) to dehydroquinate (DHQ). The protein is 3-dehydroquinate synthase of Bacillus pumilus (strain SAFR-032).